Reading from the N-terminus, the 389-residue chain is Leucine aminopeptidase 1 (389 aa).

A signal peptide spans 1-18 (MKSAALLLPLYAAAFAAA). Positions 19–89 (AFHHEHAQAV…TLKRRINAAS (71 aa)) are excised as a propeptide. N-linked (GlcNAc...) asparagine glycosylation occurs at N99. Zn(2+)-binding residues include H188, D207, E246, and D273. Residues C322 and C326 are joined by a disulfide bond. H355 is a binding site for Zn(2+).

The protein belongs to the peptidase M28 family. M28E subfamily. Monomer. Zn(2+) serves as cofactor.

The protein localises to the secreted. In terms of biological role, extracellular aminopeptidase that allows assimilation of proteinaceous substrates. The chain is Leucine aminopeptidase 1 (lap1) from Pyrenophora teres f. teres (strain 0-1) (Barley net blotch fungus).